A 218-amino-acid chain; its full sequence is Small ribosomal subunit protein uS3 (218 aa).

The KH type-2 domain maps to 38 to 106 (IREYISKRLS…RVHINILEIK (69 aa)).

The protein belongs to the universal ribosomal protein uS3 family. As to quaternary structure, part of the 30S ribosomal subunit. Forms a tight complex with proteins S10 and S14.

Binds the lower part of the 30S subunit head. Binds mRNA in the 70S ribosome, positioning it for translation. The protein is Small ribosomal subunit protein uS3 of Bacillus subtilis (strain 168).